The following is a 226-amino-acid chain: MRILGLSAALLILGGCASTNEPPVQANDPSFAPVVPDYPRETVVEDGSLFRSQLANNLYSDVTARRVGDIITVTLSENTQASKSADTSTAKDTNVNLNPITGLAGQAINIGGESIQLGVSSSRDFSGDAAANQSNSLIGAISVTVVDVLPNSNLVIRGEKWLTLNQGDEYIRLTGIIRPADISPENEIVSTKVANARIQYSGTGSFARAQEKGWLTKFFDSTWWPL.

Residues 1–15 (MRILGLSAALLILGG) form the signal peptide. Cysteine 16 is lipidated: N-palmitoyl cysteine. Cysteine 16 carries S-diacylglycerol cysteine lipidation.

The protein belongs to the FlgH family. The basal body constitutes a major portion of the flagellar organelle and consists of four rings (L,P,S, and M) mounted on a central rod.

The protein localises to the cell outer membrane. It is found in the bacterial flagellum basal body. Functionally, assembles around the rod to form the L-ring and probably protects the motor/basal body from shearing forces during rotation. This chain is Flagellar L-ring protein, found in Alteromonas mediterranea (strain DSM 17117 / CIP 110805 / LMG 28347 / Deep ecotype).